The sequence spans 466 residues: Asparagine--tRNA ligase (466 aa).

This sequence belongs to the class-II aminoacyl-tRNA synthetase family. As to quaternary structure, homodimer.

The protein localises to the cytoplasm. The catalysed reaction is tRNA(Asn) + L-asparagine + ATP = L-asparaginyl-tRNA(Asn) + AMP + diphosphate + H(+). The chain is Asparagine--tRNA ligase from Vibrio parahaemolyticus serotype O3:K6 (strain RIMD 2210633).